The sequence spans 440 residues: Chromosome partition protein MukF (440 aa).

The interval 208-236 (LSETSGTLRELQDTLEAAGDKLQANLLRI) is leucine-zipper.

It belongs to the MukF family. In terms of assembly, interacts, and probably forms a ternary complex, with MukE and MukB via its C-terminal region. The complex formation is stimulated by calcium or magnesium. It is required for an interaction between MukE and MukB.

It is found in the cytoplasm. The protein resides in the nucleoid. In terms of biological role, involved in chromosome condensation, segregation and cell cycle progression. May participate in facilitating chromosome segregation by condensation DNA from both sides of a centrally located replisome during cell division. Not required for mini-F plasmid partitioning. Probably acts via its interaction with MukB and MukE. Overexpression results in anucleate cells. It has a calcium binding activity. This Yersinia pestis protein is Chromosome partition protein MukF.